Consider the following 299-residue polypeptide: RGG repeats nuclear RNA binding protein A (299 aa).

A compositionally biased stretch (gly residues) spans 1-21 (RGGGRGGPRGGGRGRGPGRGR). 2 disordered regions span residues 1-173 (RGGG…KEMT) and 232-299 (EAVE…LVAK). Over residues 45-60 (RVQEDGESGKLSERRG) the composition is skewed to basic and acidic residues. The span at 61–78 (GYGGPRGGFHGGRRGGFN) shows a compositional bias: gly residues. Basic and acidic residues-rich tracts occupy residues 86-98 (EGER…DRRS) and 134-146 (DGEK…KEAG). The Arginine-rich RNA-binding motif E-R-P-R-R-X-[F/Y]-[E/D]-R-R-S motif lies at 88–98 (ERPRRVFDRRS). A compositionally biased stretch (gly residues) spans 267–278 (RGRGGFGGGVGG).

Belongs to the SERBP1-HABP4 family. Expressed in seedlings but not in roots.

It localises to the nucleus. It is found in the cytoplasm. The protein localises to the perinuclear region. Its function is as follows. Ribosome-binding protein that acts as a regulator of mRNA translation by promoting ribosome inactivation. Binds RNA. The protein is RGG repeats nuclear RNA binding protein A of Nicotiana tabacum (Common tobacco).